The sequence spans 101 residues: ATP-dependent Clp protease adapter protein ClpS (101 aa).

The protein belongs to the ClpS family. Binds to the N-terminal domain of the chaperone ClpA.

Functionally, involved in the modulation of the specificity of the ClpAP-mediated ATP-dependent protein degradation. The chain is ATP-dependent Clp protease adapter protein ClpS from Mycobacterium bovis (strain ATCC BAA-935 / AF2122/97).